Reading from the N-terminus, the 72-residue chain is MAKEDMIEVEGTVVETLPNAMFKVELENGHQVLATVSGKIRMHYIRILPGDKVTVELSPYDLTRGRITYRFK.

One can recognise an S1-like domain in the interval Met-1 to Lys-72.

It belongs to the IF-1 family. As to quaternary structure, component of the 30S ribosomal translation pre-initiation complex which assembles on the 30S ribosome in the order IF-2 and IF-3, IF-1 and N-formylmethionyl-tRNA(fMet); mRNA recruitment can occur at any time during PIC assembly.

It is found in the cytoplasm. One of the essential components for the initiation of protein synthesis. Stabilizes the binding of IF-2 and IF-3 on the 30S subunit to which N-formylmethionyl-tRNA(fMet) subsequently binds. Helps modulate mRNA selection, yielding the 30S pre-initiation complex (PIC). Upon addition of the 50S ribosomal subunit IF-1, IF-2 and IF-3 are released leaving the mature 70S translation initiation complex. In Enterococcus faecalis (strain ATCC 700802 / V583), this protein is Translation initiation factor IF-1.